Here is a 365-residue protein sequence, read N- to C-terminus: Aminomethyltransferase (365 aa).

This sequence belongs to the GcvT family. The glycine cleavage system is composed of four proteins: P, T, L and H.

The enzyme catalyses N(6)-[(R)-S(8)-aminomethyldihydrolipoyl]-L-lysyl-[protein] + (6S)-5,6,7,8-tetrahydrofolate = N(6)-[(R)-dihydrolipoyl]-L-lysyl-[protein] + (6R)-5,10-methylene-5,6,7,8-tetrahydrofolate + NH4(+). Functionally, the glycine cleavage system catalyzes the degradation of glycine. This is Aminomethyltransferase from Erwinia tasmaniensis (strain DSM 17950 / CFBP 7177 / CIP 109463 / NCPPB 4357 / Et1/99).